Consider the following 424-residue polypeptide: MLARKSIIPEEYVLARIAAENLRKPRIRDRLPKARFIAKSGACNLAHKNIREQGRFLQDIFTTLVDLKWRHTLVIFTMSFLCSWLLFAIMWWLVAFAHGDIYAYMEKGTMEKSGLESAVCVTNVRSFTSAFLFSIEVQVTIGFGGRMMTEECPLAITVLILQNIVGLIINAVMLGCIFMKTAQAHRRAETLIFSRHAVIAVRNGKLCFMFRVGDLRKSMIISASVRIQVVKKTTTPEGEVVPIHQQDIPVDNPIESNNIFLVAPLIICHVIDKRSPLYDISATDLANQDLEVIVILEGVVETTGITTQARTSYIAEEIQWGHRFVSIVTEEEGVYSVDYSKFGNTVRVAAPRCSARELDEKPSILIQTLQKSELSHQNSLRKRNSMRRNNSMRRNNSIRRNNSSLMVPKVQFMTPEGNQCPSES.

Over 1 to 69 (MLARKSIIPE…IFTTLVDLKW (69 aa)) the chain is Cytoplasmic. A Phosphoserine modification is found at serine 6. Residues 70-94 (RHTLVIFTMSFLCSWLLFAIMWWLV) form a helical membrane-spanning segment. Topologically, residues 95–126 (AFAHGDIYAYMEKGTMEKSGLESAVCVTNVRS) are extracellular. The segment at residues 127–138 (FTSAFLFSIEVQ) is an intramembrane region (helical; Pore-forming). Residues 139-145 (VTIGFGG) constitute an intramembrane region (pore-forming). The Selectivity filter motif lies at 140-145 (TIGFGG). Topologically, residues 146 to 154 (RMMTEECPL) are extracellular. The helical transmembrane segment at 155–176 (AITVLILQNIVGLIINAVMLGC) threads the bilayer. The Cytoplasmic segment spans residues 177–424 (IFMKTAQAHR…PEGNQCPSES (248 aa)). The disordered stretch occupies residues 373–409 (ELSHQNSLRKRNSMRRNNSMRRNNSIRRNNSSLMVPK). Residues 387-404 (RRNNSMRRNNSIRRNNSS) show a composition bias toward low complexity.

The protein belongs to the inward rectifier-type potassium channel (TC 1.A.2.1) family. KCNJ8 subfamily. Interacts with ABCC9.

Its subcellular location is the membrane. The enzyme catalyses K(+)(in) = K(+)(out). Inward rectifier potassium channels are characterized by a greater tendency to allow potassium to flow into the cell rather than out of it. Their voltage dependence is regulated by the concentration of extracellular potassium; as external potassium is raised, the voltage range of the channel opening shifts to more positive voltages. The inward rectification is mainly due to the blockage of outward current by internal magnesium. This channel is activated by internal ATP and can be blocked by external barium. Can form a sulfonylurea-sensitive but ATP-insensitive potassium channel with ABCC9. The polypeptide is ATP-sensitive inward rectifier potassium channel 8 (Kcnj8) (Mus musculus (Mouse)).